We begin with the raw amino-acid sequence, 917 residues long: PAX3- and PAX7-binding protein 1 (917 aa).

Over residues 1-11 the composition is skewed to basic residues; it reads MFRKARRVNVR. Disordered stretches follow at residues 1–123, 143–205, and 229–275; these read MFRK…FKVK, LEKS…GAFS, and RKKR…RIVF. Position 16 is a phosphoserine (S16). Residues 16–28 show a composition bias toward acidic residues; sequence SEEEERERDEEQE. 2 stretches are compositionally biased toward gly residues: residues 40–50 and 73–85; these read EEAGPGGGDRA and AEAG…GAEP. K149 participates in a covalent cross-link: Glycyl lysine isopeptide (Lys-Gly) (interchain with G-Cter in SUMO1); alternate. A Glycyl lysine isopeptide (Lys-Gly) (interchain with G-Cter in SUMO2); alternate cross-link involves residue K149. 3 positions are modified to phosphoserine: S154, S155, and S158. The segment covering 161–172 has biased composition (basic and acidic residues); that stretch reads PLDKTGHVKDTN. Residues 183 to 193 are compositionally biased toward acidic residues; it reads GEDEMDMESEK. Position 191 is a phosphoserine (S191). Over residues 234 to 256 the composition is skewed to basic and acidic residues; the sequence is MARELGDFTPHDNEPGKGRLVRE. Acidic residues predominate over residues 257-268; that stretch reads DENDASDDEDDD. S262 and S295 each carry phosphoserine. 2 disordered regions span residues 362–381 and 530–564; these read SSDA…TPSN and AERE…EETS. The segment at 378-558 is necessary and sufficient for interaction with PAX7; sequence TPSNEMTPVT…MADHLEGLSS (181 aa). Residues 542–554 are compositionally biased toward basic and acidic residues; it reads AREQTGKMADHLE. Residues S557 and S558 each carry the phosphoserine modification. The residue at position 563 (T563) is a Phosphothreonine.

The protein belongs to the GCF family. As to quaternary structure, interacts with PAX3 and PAX7. Interacts with WDR5; associates with a histone methyltransferase (HMT) complex composed at least of RBBP5, ASH2L, SET1, SET2 and KMT2A/MLL1, KMT2D/MLL2, KMT2C/MLL3 and KMT2B/MLL4 through direct interaction with WDR5. In terms of tissue distribution, ubiquitous.

The protein resides in the nucleus. Functionally, adapter protein linking the transcription factors PAX3 and PAX7 to the histone methylation machinery and involved in myogenesis. Associates with a histone methyltransferase complex that specifically mediates dimethylation and trimethylation of 'Lys-4' of histone H3. Mediates the recruitment of that complex to the transcription factors PAX3 and PAX7 on chromatin to regulate the expression of genes involved in muscle progenitor cells proliferation including ID3 and CDC20. The protein is PAX3- and PAX7-binding protein 1 (PAXBP1) of Homo sapiens (Human).